The following is a 101-amino-acid chain: DNA-binding protein Fis (101 aa).

Residues 77-96 constitute a DNA-binding region (H-T-H motif); that stretch reads QTRAANMLGINRGTLRKKLK.

It belongs to the transcriptional regulatory Fis family. As to quaternary structure, homodimer.

Its function is as follows. Activates ribosomal RNA transcription. Plays a direct role in upstream activation of rRNA promoters. This chain is DNA-binding protein Fis, found in Shewanella baltica (strain OS223).